The following is a 437-amino-acid chain: Type II methylase M.HgiEI (437 aa).

An SAM-dependent MTase C5-type domain is found at 4 to 431 (FRFIDLFAGI…KRLQCVKLFE (428 aa)). Cysteine 75 is an active-site residue.

The protein belongs to the class I-like SAM-binding methyltransferase superfamily. C5-methyltransferase family.

It carries out the reaction a 2'-deoxycytidine in DNA + S-adenosyl-L-methionine = a 5-methyl-2'-deoxycytidine in DNA + S-adenosyl-L-homocysteine + H(+). Its function is as follows. A methylase that recognizes the double-stranded sequence 5'-GGWCC-3', methylates C-? on both strands, and protects the DNA from cleavage by the HgiEI endonuclease. This system is more active than isoschizomeric RM.HgiBI. This chain is Type II methylase M.HgiEI, found in Herpetosiphon aurantiacus (Herpetosiphon giganteus).